An 81-amino-acid polypeptide reads, in one-letter code: U6-theraphotoxin-Hs1a (81 aa).

The N-terminal stretch at 1-21 is a signal peptide; that stretch reads MKASMFLALAGLVLLFVVCYA. The propeptide occupies 22–48; sequence SESEEKEFPRELLSTIFAVDDFKGEER. Disulfide bonds link Cys50/Cys65 and Cys57/Cys70.

It belongs to the neurotoxin 10 (Hwtx-1) family. 51 (Hntx-8) subfamily. Expressed by the venom gland.

It is found in the secreted. Functionally, binds to the nicotinic acetylcholine receptor. Blocks neuromuscular transmission. This Cyriopagopus schmidti (Chinese bird spider) protein is U6-theraphotoxin-Hs1a.